The chain runs to 607 residues: Zinc metalloproteinase-disintegrin-like atrase-A (607 aa).

An N-terminal signal peptide occupies residues 1–20; the sequence is MIQALLVIICLAVFPHQGSS. Positions 21-196 are excised as a propeptide; sequence IILESGNVND…KTSQLTNTPE (176 aa). Residues 205–398 enclose the Peptidase M12B domain; sequence KYIEFYLVVD…ERPQCILNKP (194 aa). Glu208 is a binding site for Ca(2+). Residues Asn220 and Asn270 are each glycosylated (N-linked (GlcNAc...) asparagine). Residue Asp290 coordinates Ca(2+). Asn301 carries an N-linked (GlcNAc...) asparagine glycan. Cystine bridges form between Cys314–Cys393, Cys353–Cys377, and Cys355–Cys360. His338, His342, and His348 together coordinate Zn(2+). Ca(2+) contacts are provided by Cys393, Asn396, Asn411, Phe413, Glu415, Glu418, and Asp421. The Disintegrin domain maps to 406-492; that stretch reads RPVCGNNFVE…ECPTDSLQRN (87 aa). Intrachain disulfides connect Cys409-Cys438, Cys420-Cys433, Cys422-Cys428, Cys432-Cys455, Cys446-Cys452, Cys451-Cys477, Cys464-Cys484, Cys471-Cys503, Cys496-Cys508, Cys515-Cys565, Cys530-Cys573, Cys543-Cys553, Cys560-Cys599, and Cys593-Cys604. Asn434 carries an N-linked (GlcNAc...) asparagine glycan. The D/ECD-tripeptide motif lies at 470–472; the sequence is DCD. Residues Asp472, Leu473, Glu475, Asp487, and Ser488 each coordinate Ca(2+). N-linked (GlcNAc...) asparagine glycosylation is present at Asn522.

Belongs to the venom metalloproteinase (M12B) family. P-III subfamily. P-IIIa sub-subfamily. Monomer. It depends on Zn(2+) as a cofactor. As to expression, expressed by the venom gland.

It is found in the secreted. Functionally, snake venom zinc metalloproteinase that inhibits platelet aggregation by cleaving platelet glycoprotein Ib alpha (GP1BA) at Glu-298/Asp-299, and abolishes binding of von Willebrand factor (VWF) to GPIBA. The protein is Zinc metalloproteinase-disintegrin-like atrase-A of Naja atra (Chinese cobra).